Reading from the N-terminus, the 256-residue chain is Vesicle-associated protein 1-1 (256 aa).

Methionine 1 carries the N-acetylmethionine modification. At 1 to 232 (MSNIDLIGMS…RRESKKSQSG (232 aa)) the chain is on the cytoplasmic side. At serine 2 the chain carries N-acetylserine; in Vesicle-associated protein 1-1, N-terminally processed. The region spanning 22–142 (LLTVEPLDLQ…EETKLRVTYV (121 aa)) is the MSP domain. The interval 142–169 (VAPPRPPSPVHEGSEEGSSPRASVSDNG) is disordered. Serine 149 is modified (phosphoserine). The segment covering 157–169 (EGSSPRASVSDNG) has biased composition (polar residues). A coiled-coil region spans residues 187–232 (HQENTSEARALITKLTEEKQSAIQLNNRLQRELDQLRRESKKSQSG). A helical; Anchor for type IV membrane protein membrane pass occupies residues 233–253 (GIPFMYVLLVGLIGLILGYIM).

The protein belongs to the VAMP-associated protein (VAP) (TC 9.B.17) family. Homodimer or homooligomer. Interacts with the cowpea mosaic virus (CPMV) NTP-binding protein (NTB). Interacts with NET3C.

The protein localises to the endoplasmic reticulum membrane. It is found in the protein storage vacuole membrane. Its function is as follows. Part of a membrane-cytoskeletal adapter complex that forms a bridge between the endoplasmic reticulum and the plasma membrane. Associates with microtubules. The protein is Vesicle-associated protein 1-1 (PVA11) of Arabidopsis thaliana (Mouse-ear cress).